Reading from the N-terminus, the 460-residue chain is Nuclear transport factor 2 (460 aa).

Residues 15–131 (VGRAFVEQYY…YFVLNDVFRF (117 aa)) enclose the NTF2 domain. 3 disordered regions span residues 207–226 (EPPT…GDAP), 238–289 (KSSP…VDVE), and 361–460 (RQAV…GGSS). One can recognise an RRM domain in the interval 293-370 (HSIYVRNLPF…RQAVVEEKKT (78 aa)). Gly residues predominate over residues 373 to 382 (RGGGNNGGSR). A compositionally biased stretch (low complexity) spans 383–394 (GRYFSGRGSFRN). Gly residues-rich tracts occupy residues 399–416 (GGRG…GGEF) and 450–460 (GRGGARGGGSS).

Interacts with MBD6.

It localises to the cytoplasm. It is found in the nucleus. Its function is as follows. Involved in RNA-directed DNA methylation (RdDM). The protein is Nuclear transport factor 2 of Arabidopsis thaliana (Mouse-ear cress).